The chain runs to 259 residues: UPF0014 membrane protein slr1647 (259 aa).

Transmembrane regions (helical) follow at residues 4 to 24 (ALIELDWADIGWMLGLLGAAI), 34 to 54 (LTGQLLWAGGRTILQLIVVGY), 55 to 75 (FLAVVFSLDNPWAVLLVLAIM), 98 to 118 (LWLSLGASTAISLGYALVVII), 128 to 148 (YLIPLTGMILGQTMNSASLAG), 195 to 215 (MMVVGLVSLPGMLTGQVLAGG), and 225 to 245 (ILIMFLILLTNTLSTIAVTAT).

The protein belongs to the UPF0014 family.

Its subcellular location is the cell membrane. This Synechocystis sp. (strain ATCC 27184 / PCC 6803 / Kazusa) protein is UPF0014 membrane protein slr1647.